Here is a 458-residue protein sequence, read N- to C-terminus: Protein RICE SALT SENSITIVE 3 (458 aa).

The segment covering 1–17 has biased composition (gly residues); that stretch reads MVGSGAAGGGGGGGGGG. Disordered regions lie at residues 1–21, 220–325, 354–374, and 386–458; these read MVGSGAAGGGGGGGGGGDHAR, TSPS…PEGD, GGGADDGSKTAAAAQDAGHGG, and SHSN…TFLE. Low complexity predominate over residues 220 to 232; the sequence is TSPSPSSFPLKQQ. The span at 245–262 shows a compositional bias: pro residues; it reads HAPPQLPPGASPLFPPGP. A compositionally biased stretch (low complexity) spans 308-317; it reads QQPMAAPQQH. Positions 413–436 are enriched in low complexity; it reads SSSTTSTSPSVSASTAPAPPQQQQ.

Interacts with BHLH094, BHLH089, TIFY11A/JAZ9 and TIFY11C/JAZ11. Forms a ternary complex with TIFY11A/JAZ9 and BHLH094 in the nucleus. As to expression, expressed in root tips. Expressed at high levels in the meristematic zone and at low levels in the elongation zone of the root tip.

The protein resides in the nucleus. The protein localises to the cytoplasm. Involved in the repression of jasmonate (JA)-induced genes. Forms a ternary complex with TIFY11A/JAZ9 and BHLH094 to negatively regulate JA-responsive genes. Involved in transcriptional regulation in the root tip. Plays a regulatory role in root cell elongation. Regulates root cell elongation during salt stress. The protein is Protein RICE SALT SENSITIVE 3 of Oryza sativa subsp. japonica (Rice).